The primary structure comprises 205 residues: Small ribosomal subunit protein uS4 (205 aa).

The tract at residues 19–45 (IWGRPKSPVNRREYGPGQHGQRRKGKL) is disordered. The 64-residue stretch at 94–157 (RRLDAVVYRA…KQLAFVLEAS (64 aa)) folds into the S4 RNA-binding domain.

Part of the 30S ribosomal subunit. Contacts protein S5. The interaction surface between S4 and S5 is involved in control of translational fidelity. Post-translationally, may be methylated on an undetermined residue.

One of the primary rRNA binding proteins, it binds directly to 16S rRNA where it nucleates assembly of the body of the 30S subunit. Functionally, with S5 and S12 plays an important role in translational accuracy. The polypeptide is Small ribosomal subunit protein uS4 (Rhodopseudomonas palustris (strain ATCC BAA-98 / CGA009)).